A 223-amino-acid polypeptide reads, in one-letter code: Protein disulfide-isomerase-like protein EhSep2 (223 aa).

The first 17 residues, 1–17 (MALRSLTLLCAAAGASA), serve as a signal peptide directing secretion. Positions 18–125 (GAIELTPDNF…DELKKFAENE (108 aa)) constitute a Thioredoxin domain. A non-standard amino acid (selenocysteine) is located at residue Sec-47. A coiled-coil region spans residues 155-201 (EKRTEMLETLKKELADAESTHEALLKELQATYKESMDKLEKLKEESA). Residues 201-223 (APKIKLLKAATPAPKAEGAKDEV) form a disordered region. Residues 203 to 216 (KIKLLKAATPAPKA) are compositionally biased toward low complexity. Positions 220 to 223 (KDEV) match the Prevents secretion from ER motif.

This sequence belongs to the protein disulfide isomerase family.

The protein resides in the endoplasmic reticulum lumen. This chain is Protein disulfide-isomerase-like protein EhSep2 (SEP2), found in Emiliania huxleyi (Coccolithophore).